The following is a 65-amino-acid chain: MNGRLLEIVACPICQGRLKYDSENEQLICHFDHIAYPIKQGIPILLSDQAIGLSTSLTNPEQQNQ.

This sequence belongs to the UPF0434 family.

The protein is UPF0434 protein HSM_0997 of Histophilus somni (strain 2336) (Haemophilus somnus).